Here is a 105-residue protein sequence, read N- to C-terminus: MQRHESGNTESNVVHPAELIVYSLLSNDLDGIYQSINDLRESQALLILMLRKIKNSLKEETQLLYDKSNWKDDNERLDSLRKRVDSLKSRFQSLKLRSDKLEQRE.

Residues 70–105 (WKDDNERLDSLRKRVDSLKSRFQSLKLRSDKLEQRE) are a coiled coil.

This sequence belongs to the SNAPIN family. In terms of assembly, component of the biogenesis of lysosome-related organelles complex-1 (BLOC-1).

The protein localises to the endosome. Component of the biogenesis of lysosome-related organelles complex-1 (BLOC-1), a complex involved in endosomal cargo sorting. The sequence is that of Biogenesis of lysosome-related organelles complex 1 subunit SNN1 (SNN1) from Zygosaccharomyces rouxii (strain ATCC 2623 / CBS 732 / NBRC 1130 / NCYC 568 / NRRL Y-229).